Consider the following 284-residue polypeptide: Diaminopimelate epimerase (284 aa).

Positions 13 and 70 each coordinate substrate. Residue C79 is the Proton donor of the active site. Substrate is bound by residues G80 to N81, N167, N200, and E218 to R219. The active-site Proton acceptor is the C227. G228 to T229 contributes to the substrate binding site.

It belongs to the diaminopimelate epimerase family. As to quaternary structure, homodimer.

It is found in the cytoplasm. The catalysed reaction is (2S,6S)-2,6-diaminopimelate = meso-2,6-diaminopimelate. Its pathway is amino-acid biosynthesis; L-lysine biosynthesis via DAP pathway; DL-2,6-diaminopimelate from LL-2,6-diaminopimelate: step 1/1. In terms of biological role, catalyzes the stereoinversion of LL-2,6-diaminopimelate (L,L-DAP) to meso-diaminopimelate (meso-DAP), a precursor of L-lysine and an essential component of the bacterial peptidoglycan. The sequence is that of Diaminopimelate epimerase from Prochlorococcus marinus (strain NATL2A).